Here is a 291-residue protein sequence, read N- to C-terminus: Small ribosomal subunit protein uS2 (291 aa).

The disordered stretch occupies residues 256 to 291 (STTAPPNWEATGGDWATSTAPAEGWAGDAPAGETKW).

It belongs to the universal ribosomal protein uS2 family. Component of the small ribosomal subunit. Mature ribosomes consist of a small (40S) and a large (60S) subunit. The 40S subunit contains about 33 different proteins and 1 molecule of RNA (18S). The 60S subunit contains about 49 different proteins and 3 molecules of RNA (25S, 5.8S and 5S). Interacts with RPS21.

It localises to the cytoplasm. Required for the assembly and/or stability of the 40S ribosomal subunit. Required for the processing of the 20S rRNA-precursor to mature 18S rRNA in a late step of the maturation of 40S ribosomal subunits. The chain is Small ribosomal subunit protein uS2 from Coccidioides immitis (strain RS) (Valley fever fungus).